Reading from the N-terminus, the 620-residue chain is 1-deoxy-D-xylulose-5-phosphate synthase (620 aa).

Thiamine diphosphate is bound by residues histidine 80 and 121 to 123 (GHS). Aspartate 152 serves as a coordination point for Mg(2+). Residues 153 to 154 (GA), asparagine 181, tyrosine 288, and glutamate 370 contribute to the thiamine diphosphate site. Asparagine 181 serves as a coordination point for Mg(2+).

This sequence belongs to the transketolase family. DXPS subfamily. As to quaternary structure, homodimer. Requires Mg(2+) as cofactor. The cofactor is thiamine diphosphate.

The enzyme catalyses D-glyceraldehyde 3-phosphate + pyruvate + H(+) = 1-deoxy-D-xylulose 5-phosphate + CO2. It functions in the pathway metabolic intermediate biosynthesis; 1-deoxy-D-xylulose 5-phosphate biosynthesis; 1-deoxy-D-xylulose 5-phosphate from D-glyceraldehyde 3-phosphate and pyruvate: step 1/1. Catalyzes the acyloin condensation reaction between C atoms 2 and 3 of pyruvate and glyceraldehyde 3-phosphate to yield 1-deoxy-D-xylulose-5-phosphate (DXP). The protein is 1-deoxy-D-xylulose-5-phosphate synthase of Escherichia coli (strain K12 / MC4100 / BW2952).